Consider the following 544-residue polypeptide: Phosphoacetylglucosamine mutase (544 aa).

Serine 66 serves as the catalytic Phosphoserine intermediate. Mg(2+)-binding residues include serine 66, aspartate 290, aspartate 292, and aspartate 294. Substrate is bound by residues 387–389, 512–516, and arginine 521; these read EAN and RASGT.

This sequence belongs to the phosphohexose mutase family. It depends on Mg(2+) as a cofactor.

The catalysed reaction is N-acetyl-alpha-D-glucosamine 1-phosphate = N-acetyl-D-glucosamine 6-phosphate. It participates in nucleotide-sugar biosynthesis; UDP-N-acetyl-alpha-D-glucosamine biosynthesis; N-acetyl-alpha-D-glucosamine 1-phosphate from alpha-D-glucosamine 6-phosphate (route I): step 2/2. Functionally, catalyzes the conversion of GlcNAc-6-P into GlcNAc-1-P during the synthesis of uridine diphosphate/UDP-GlcNAc, which is a biosynthetic precursor of chitin and also supplies the amino sugars for N-linked oligosaccharides of glycoproteins. This is Phosphoacetylglucosamine mutase from Candida albicans (Yeast).